We begin with the raw amino-acid sequence, 75 residues long: Protein B7 (75 aa).

The protein is Protein B7 (B7) of Human herpesvirus 6B (strain Z29) (HHV-6 variant B).